The primary structure comprises 60 residues: MTETITFTLVKSGIGSTDKIRATLTGLGLTKLNKTVTRKDTPEIRGMLNKVKHLVRIDEA.

The protein belongs to the universal ribosomal protein uL30 family. As to quaternary structure, part of the 50S ribosomal subunit.

The chain is Large ribosomal subunit protein uL30 from Desulfotalea psychrophila (strain LSv54 / DSM 12343).